The sequence spans 91 residues: Large ribosomal subunit protein uL23 (91 aa).

The protein belongs to the universal ribosomal protein uL23 family. Part of the 50S ribosomal subunit. Contacts protein L29, and trigger factor when it is bound to the ribosome.

One of the early assembly proteins it binds 23S rRNA. One of the proteins that surrounds the polypeptide exit tunnel on the outside of the ribosome. Forms the main docking site for trigger factor binding to the ribosome. This chain is Large ribosomal subunit protein uL23, found in Staphylococcus haemolyticus (strain JCSC1435).